The following is a 1449-amino-acid chain: MGARASVLTGGKLDQWESIYLRPGGKKKYRMKHLVWASRELERFACNPGLMDTADGCAKLLNQLEPALKTGSEELRSLYNALAVLYCVHSRIQIHNTQEALDKIKEKQEQHKPEPKNPEAGAAAATDSNISRNYPLVQTAQGQMVHQPLTPRTLNAWVKVIEEKAFSPEVIPMFMALSEGATPSDLNTMLNTVGGHQAAMQMLKEVINEEAADWDRTHPVPVGPLPPGQLRDPRGSDIAGTTSTLAEQVAWMTANPPVPVGDIYRRWIVLGLNRIVRMYSPVSILEIKQGPKEPFRDYVDRFYKTLRAEQATQEVKNWMTETLLVQNANPDCKQLLKALGPGATLEEMMTACQGVGGPAHKARVLAEAMSQVQQPTTSVFAQRGNFKGIRKPIKCFNCGKEGHLARNCKAPRRGGCWKCGQEGHQMKDCKNEGRQFFREELVSLQRETRKLPPDNNKERAHSPATRELWVSGGEEHTGEGDAGEPGEDRELSVPTFNFPQITLWQRPVITVKIGKEVREALLDTGADDTVIEELQLEGKWKPKMIGGIGGFIKVRQYDNITVDIQGRKAVGTVLVGPTPVNIIGRNLLTQIGCTLNFPISPIETVPVKLKPGMDGPKVKQWPLTTEKIEALREICTEMEKEGKISRIGPENPYNTPIFAIKKKDSTKWRKLVDFRELNKRTQDFWEVQLGIPHPAGLKQKKSVTVLDVGDAYFSCPLDKDFRKYTAFTIPSINNETPGIRYQYNVLPQGWKGSPAIFQSTMTKILEPFREKHPEIIIYQYMDDLYVGSDLELAQHREAVEDLRDHLLKWGFTTPDKKHQKEPPFLWMGYELHPDKWTVQPIKLPEKDVWTVNDIQKLVGKLNWASQIYPGIRVKQLCKLIRGTKALTEVVNFTEEAELELAENREILKEPLHGVYYDPGKELVAEIQKQGQGQWTYQIYQELHKNLKTGKYAKMRSAHTNDIKQLVEVVRKVATESIVIWGKTPKFRLPVQKEVWEAWWTDHWQATWIPEWEFVNTPPLVKLWYQLETEPISGAETFYVDGAANRETKLGKAGFVTDRGRQKVVSIADTTNQKAELQAILMALQESGRDVNIVTDSQYAMGIIHSQPDKSESELVSQIIEELIKKERVYLSWVPAHKGIGGNEQVDKLVSSGIRKILFLDGIEKAQEDHDRYHSNWKAMASDFNLPPIVAKEIVASCDKCQLKGEAMHGQVNCSPGVWQLDCTHLEGKIILVAVHVASGYLEAEVIPAETGQETAYFILKLAGRWPVKVIHTDNGSNFTSATVKAACWWANIKQEFGIPYNPQSQGAVESMNKELKKIIGQIRDQAEHLKTAVQMAVFIHNFKRKGGIGGYTAGERIIDIIATDIQTTNLQTQILKVQNFRVYYRDSRDPIWKGPAKLLWKGEGAVVIQDNGDIKVVPRRKAKIIRDYGKQMAGDGCVASGQDENQEME.

Glycine 2 carries the N-myristoyl glycine; by host lipid modification. Positions 7 to 31 (VLTGGKLDQWESIYLRPGGKKKYRM) are interaction with Gp41. Positions 8–43 (LTGGKLDQWESIYLRPGGKKKYRMKHLVWASRELER) are interaction with host CALM1. An interaction with host AP3D1 region spans residues 12-19 (KLDQWESI). Residues 14 to 33 (DQWESIYLRPGGKKKYRMKH) are interaction with membrane phosphatidylinositol 4,5-bisphosphate and RNA. Residues 16 to 22 (WESIYLR) carry the Nuclear export signal motif. The Nuclear localization signal motif lies at 26–32 (KKKYRMK). The interaction with membrane phosphatidylinositol 4,5-bisphosphate stretch occupies residues 73–77 (EELRS). Tyrosine 134 bears the Phosphotyrosine; by host mark. The segment at 191 to 229 (NTVGGHQAAMQMLKEVINEEAADWDRTHPVPVGPLPPGQ) is interaction with human PPIA/CYPA and NUP153. The tract at residues 279–365 (YSPVSILEIK…GGPAHKARVL (87 aa)) is dimerization/Multimerization of capsid protein p24. CCHC-type zinc fingers lie at residues 393–410 (IKCFNCGKEGHLARNCKA) and 414–431 (GGCWKCGQEGHQMKDCKN). A compositionally biased stretch (basic and acidic residues) spans 447 to 461 (ETRKLPPDNNKERAH). The disordered stretch occupies residues 447-489 (ETRKLPPDNNKERAHSPATRELWVSGGEEHTGEGDAGEPGEDR). A dimerization of protease region spans residues 499 to 503 (PQITL). Residues 518–587 (REALLDTGAD…TPVNIIGRNL (70 aa)) enclose the Peptidase A2 domain. The For protease activity; shared with dimeric partner role is filled by aspartate 523. Dimerization of protease regions lie at residues 547 to 553 (GIGGFIK) and 586 to 598 (NLLTQIGCTLNFP). Positions 641–831 (EGKISRIGPE…PPFLWMGYEL (191 aa)) constitute a Reverse transcriptase domain. 3 residues coordinate Mg(2+): aspartate 707, aspartate 782, and aspartate 783. The segment at 824–832 (FLWMGYELH) is RT 'primer grip'. Residues 995–1011 (WEAWWTDHWQATWIPEW) carry the Tryptophan repeat motif motif. Residues 1031 to 1154 (ISGAETFYVD…VDKLVSSGIR (124 aa)) enclose the RNase H type-1 domain. The Mg(2+) site is built by aspartate 1040, glutamate 1075, aspartate 1095, and aspartate 1146. The Integrase-type zinc-finger motif lies at 1160-1201 (DGIEKAQEDHDRYHSNWKAMASDFNLPPIVAKEIVASCDKCQ). Positions 1169, 1173, 1197, and 1200 each coordinate Zn(2+). The Integrase catalytic domain occupies 1211–1361 (VNCSPGVWQL…TAGERIIDII (151 aa)). Mg(2+) is bound by residues aspartate 1221, aspartate 1273, and glutamate 1309. A DNA-binding region (integrase-type) is located at residues 1380 to 1427 (FRVYYRDSRDPIWKGPAKLLWKGEGAVVIQDNGDIKVVPRRKAKIIRD).

In terms of assembly, homotrimer; further assembles as hexamers of trimers. Interacts with gp41 (via C-terminus). Interacts with host CALM1; this interaction induces a conformational change in the Matrix protein, triggering exposure of the myristate group. Interacts with host AP3D1; this interaction allows the polyprotein trafficking to multivesicular bodies during virus assembly. Part of the pre-integration complex (PIC) which is composed of viral genome, matrix protein, Vpr and integrase. Homodimer; the homodimer further multimerizes as homohexamers or homopentamers. Interacts with human PPIA/CYPA; This interaction stabilizes the capsid. Interacts with human NUP153. Interacts with host PDZD8; this interaction stabilizes the capsid. Interacts with monkey TRIM5; this interaction destabilizes the capsid. As to quaternary structure, homodimer, whose active site consists of two apposed aspartic acid residues. In terms of assembly, heterodimer of p66 RT and p51 RT (RT p66/p51). Heterodimerization of RT is essential for DNA polymerase activity. The overall folding of the subdomains is similar in p66 RT and p51 RT but the spatial arrangements of the subdomains are dramatically different. Homotetramer; may further associate as a homohexadecamer. Part of the pre-integration complex (PIC) which is composed of viral genome, matrix protein, Vpr and integrase. Interacts with human SMARCB1/INI1 and human PSIP1/LEDGF isoform 1. Interacts with human KPNA3; this interaction might play a role in nuclear import of the pre-integration complex. Interacts with human NUP153; this interaction might play a role in nuclear import of the pre-integration complex. Requires Mg(2+) as cofactor. In terms of processing, specific enzymatic cleavages by the viral protease yield mature proteins. The protease is released by autocatalytic cleavage. The polyprotein is cleaved during and after budding, this process is termed maturation. Proteolytic cleavage of p66 RT removes the RNase H domain to yield the p51 RT subunit. Nucleocapsid protein p7 might be further cleaved after virus entry. Tyrosine phosphorylated presumably in the virion by a host kinase. Phosphorylation is apparently not a major regulator of membrane association. Post-translationally, phosphorylated possibly by host MAPK1; this phosphorylation is necessary for Pin1-mediated virion uncoating. In terms of processing, methylated by host PRMT6, impairing its function by reducing RNA annealing and the initiation of reverse transcription.

The protein resides in the host cell membrane. It is found in the host endosome. It localises to the host multivesicular body. The protein localises to the virion membrane. Its subcellular location is the host nucleus. The protein resides in the host cytoplasm. It is found in the virion. It carries out the reaction Specific for a P1 residue that is hydrophobic, and P1' variable, but often Pro.. It catalyses the reaction Endohydrolysis of RNA in RNA/DNA hybrids. Three different cleavage modes: 1. sequence-specific internal cleavage of RNA. Human immunodeficiency virus type 1 and Moloney murine leukemia virus enzymes prefer to cleave the RNA strand one nucleotide away from the RNA-DNA junction. 2. RNA 5'-end directed cleavage 13-19 nucleotides from the RNA end. 3. DNA 3'-end directed cleavage 15-20 nucleotides away from the primer terminus.. The catalysed reaction is 3'-end directed exonucleolytic cleavage of viral RNA-DNA hybrid.. The enzyme catalyses DNA(n) + a 2'-deoxyribonucleoside 5'-triphosphate = DNA(n+1) + diphosphate. Protease: The viral protease is inhibited by many synthetic protease inhibitors (PIs), such as amprenavir, atazanavir, indinavir, loprinavir, nelfinavir, ritonavir and saquinavir. Use of protease inhibitors in tritherapy regimens permit more ambitious therapeutic strategies. Reverse transcriptase/ribonuclease H: RT can be inhibited either by nucleoside RT inhibitors (NRTIs) or by non nucleoside RT inhibitors (NNRTIs). NRTIs act as chain terminators, whereas NNRTIs inhibit DNA polymerization by binding a small hydrophobic pocket near the RT active site and inducing an allosteric change in this region. Classical NRTIs are abacavir, adefovir (PMEA), didanosine (ddI), lamivudine (3TC), stavudine (d4T), tenofovir (PMPA), zalcitabine (ddC), and zidovudine (AZT). Classical NNRTIs are atevirdine (BHAP U-87201E), delavirdine, efavirenz (DMP-266), emivirine (I-EBU), and nevirapine (BI-RG-587). The tritherapies used as a basic effective treatment of AIDS associate two NRTIs and one NNRTI. Functionally, mediates, with Gag polyprotein, the essential events in virion assembly, including binding the plasma membrane, making the protein-protein interactions necessary to create spherical particles, recruiting the viral Env proteins, and packaging the genomic RNA via direct interactions with the RNA packaging sequence (Psi). Gag-Pol polyprotein may regulate its own translation, by the binding genomic RNA in the 5'-UTR. At low concentration, the polyprotein would promote translation, whereas at high concentration, the polyprotein would encapsidate genomic RNA and then shut off translation. Its function is as follows. Targets the polyprotein to the plasma membrane via a multipartite membrane-binding signal, that includes its myristoylated N-terminus. Matrix protein is part of the pre-integration complex. Implicated in the release from host cell mediated by Vpu. Binds to RNA. Forms the conical core that encapsulates the genomic RNA-nucleocapsid complex in the virion. Most core are conical, with only 7% tubular. The core is constituted by capsid protein hexamer subunits. The core is disassembled soon after virion entry. Host restriction factors such as TRIM5-alpha or TRIMCyp bind retroviral capsids and cause premature capsid disassembly, leading to blocks in reverse transcription. Capsid restriction by TRIM5 is one of the factors which restricts HIV-1 to the human species. Host PIN1 apparently facilitates the virion uncoating. On the other hand, interactions with PDZD8 or CYPA stabilize the capsid. In terms of biological role, encapsulates and protects viral dimeric unspliced genomic RNA (gRNA). Binds these RNAs through its zinc fingers. Acts as a nucleic acid chaperone which is involved in rearangement of nucleic acid secondary structure during gRNA retrotranscription. Also facilitates template switch leading to recombination. As part of the polyprotein, participates in gRNA dimerization, packaging, tRNA incorporation and virion assembly. Functionally, aspartyl protease that mediates proteolytic cleavages of Gag and Gag-Pol polyproteins during or shortly after the release of the virion from the plasma membrane. Cleavages take place as an ordered, step-wise cascade to yield mature proteins. This process is called maturation. Displays maximal activity during the budding process just prior to particle release from the cell. Also cleaves Nef and Vif, probably concomitantly with viral structural proteins on maturation of virus particles. Hydrolyzes host EIF4GI and PABP1 in order to shut off the capped cellular mRNA translation. The resulting inhibition of cellular protein synthesis serves to ensure maximal viral gene expression and to evade host immune response. Also mediates cleavage of host YTHDF3. Mediates cleavage of host CARD8, thereby activating the CARD8 inflammasome, leading to the clearance of latent HIV-1 in patient CD4(+) T-cells after viral reactivation; in contrast, HIV-1 can evade CARD8-sensing when its protease remains inactive in infected cells prior to viral budding. Its function is as follows. Multifunctional enzyme that converts the viral RNA genome into dsDNA in the cytoplasm, shortly after virus entry into the cell. This enzyme displays a DNA polymerase activity that can copy either DNA or RNA templates, and a ribonuclease H (RNase H) activity that cleaves the RNA strand of RNA-DNA heteroduplexes in a partially processive 3' to 5' endonucleasic mode. Conversion of viral genomic RNA into dsDNA requires many steps. A tRNA(3)-Lys binds to the primer-binding site (PBS) situated at the 5'-end of the viral RNA. RT uses the 3' end of the tRNA primer to perform a short round of RNA-dependent minus-strand DNA synthesis. The reading proceeds through the U5 region and ends after the repeated (R) region which is present at both ends of viral RNA. The portion of the RNA-DNA heteroduplex is digested by the RNase H, resulting in a ssDNA product attached to the tRNA primer. This ssDNA/tRNA hybridizes with the identical R region situated at the 3' end of viral RNA. This template exchange, known as minus-strand DNA strong stop transfer, can be either intra- or intermolecular. RT uses the 3' end of this newly synthesized short ssDNA to perform the RNA-dependent minus-strand DNA synthesis of the whole template. RNase H digests the RNA template except for two polypurine tracts (PPTs) situated at the 5'-end and near the center of the genome. It is not clear if both polymerase and RNase H activities are simultaneous. RNase H probably can proceed both in a polymerase-dependent (RNA cut into small fragments by the same RT performing DNA synthesis) and a polymerase-independent mode (cleavage of remaining RNA fragments by free RTs). Secondly, RT performs DNA-directed plus-strand DNA synthesis using the PPTs that have not been removed by RNase H as primers. PPTs and tRNA primers are then removed by RNase H. The 3' and 5' ssDNA PBS regions hybridize to form a circular dsDNA intermediate. Strand displacement synthesis by RT to the PBS and PPT ends produces a blunt ended, linear dsDNA copy of the viral genome that includes long terminal repeats (LTRs) at both ends. Catalyzes viral DNA integration into the host chromosome, by performing a series of DNA cutting and joining reactions. This enzyme activity takes place after virion entry into a cell and reverse transcription of the RNA genome in dsDNA. The first step in the integration process is 3' processing. This step requires a complex comprising the viral genome, matrix protein, Vpr and integrase. This complex is called the pre-integration complex (PIC). The integrase protein removes 2 nucleotides from each 3' end of the viral DNA, leaving recessed CA OH's at the 3' ends. In the second step, the PIC enters cell nucleus. This process is mediated through integrase and Vpr proteins, and allows the virus to infect a non dividing cell. This ability to enter the nucleus is specific of lentiviruses, other retroviruses cannot and rely on cell division to access cell chromosomes. In the third step, termed strand transfer, the integrase protein joins the previously processed 3' ends to the 5' ends of strands of target cellular DNA at the site of integration. The 5'-ends are produced by integrase-catalyzed staggered cuts, 5 bp apart. A Y-shaped, gapped, recombination intermediate results, with the 5'-ends of the viral DNA strands and the 3' ends of target DNA strands remaining unjoined, flanking a gap of 5 bp. The last step is viral DNA integration into host chromosome. This involves host DNA repair synthesis in which the 5 bp gaps between the unjoined strands are filled in and then ligated. Since this process occurs at both cuts flanking the HIV genome, a 5 bp duplication of host DNA is produced at the ends of HIV-1 integration. Alternatively, Integrase may catalyze the excision of viral DNA just after strand transfer, this is termed disintegration. The sequence is that of Gag-Pol polyprotein (gag-pol) from Human immunodeficiency virus type 1 group N (isolate YBF30) (HIV-1).